We begin with the raw amino-acid sequence, 257 residues long: MLLVIDVGNTNTVMGVFDDQRVVCDWRIRTERETTEDEFFVLASQLFAGKDIKPEIITATIVSCVVPPMRKILHAFCKKYLGHEPIWVSAEMDMGMPILYDNPAEVGADRIVNAVAAYERYHDALIVIDFGTATTFDCISKDGEYLGGAISPGVGIASEALFARASKLPRVEIFNPPAQAIGKDTAKSMQSGIILGYAGLVDGLVRRIVKEMENKPRVIATGGLAPLMANVAETIEEVESGLTLEGLRIIFDRVSNS.

Residue 6–13 (DVGNTNTV) coordinates ATP. Substrate-binding positions include Y100 and 107–110 (GADR). D109 (proton acceptor) is an active-site residue. D129 serves as a coordination point for K(+). T132 lines the ATP pocket. T185 provides a ligand contact to substrate.

Belongs to the type III pantothenate kinase family. Homodimer. NH4(+) serves as cofactor. The cofactor is K(+).

Its subcellular location is the cytoplasm. The catalysed reaction is (R)-pantothenate + ATP = (R)-4'-phosphopantothenate + ADP + H(+). Its pathway is cofactor biosynthesis; coenzyme A biosynthesis; CoA from (R)-pantothenate: step 1/5. In terms of biological role, catalyzes the phosphorylation of pantothenate (Pan), the first step in CoA biosynthesis. This chain is Type III pantothenate kinase, found in Desulfatibacillum aliphaticivorans.